Consider the following 480-residue polypeptide: Serine carboxypeptidase-like 35 (480 aa).

An N-terminal signal peptide occupies residues 1-20 (MKKNALWLLCILVLPAIACG). 2 N-linked (GlcNAc...) asparagine glycosylation sites follow: Asn-79 and Asn-146. Disulfide bonds link Cys-95–Cys-363, Cys-257–Cys-270, and Cys-294–Cys-331. The active site involves Ser-188. An N-linked (GlcNAc...) asparagine glycan is attached at Asn-265. Asn-352 carries N-linked (GlcNAc...) asparagine glycosylation. Catalysis depends on residues Asp-399 and His-452.

This sequence belongs to the peptidase S10 family. In terms of tissue distribution, expressed in seedlings, flowers and siliques.

Its subcellular location is the secreted. Its function is as follows. Probable carboxypeptidase. The sequence is that of Serine carboxypeptidase-like 35 (SCPL35) from Arabidopsis thaliana (Mouse-ear cress).